The chain runs to 116 residues: Large ribosomal subunit protein bL20 (116 aa).

The protein belongs to the bacterial ribosomal protein bL20 family.

In terms of biological role, binds directly to 23S ribosomal RNA and is necessary for the in vitro assembly process of the 50S ribosomal subunit. It is not involved in the protein synthesizing functions of that subunit. This Nautilia profundicola (strain ATCC BAA-1463 / DSM 18972 / AmH) protein is Large ribosomal subunit protein bL20.